We begin with the raw amino-acid sequence, 230 residues long: Ribonuclease 3 (230 aa).

The 121-residue stretch at 5-125 folds into the RNase III domain; that stretch reads YSRLYKILGY…IIGAIYLDSD (121 aa). Glu40 contributes to the Mg(2+) binding site. The active site involves Asp44. Positions 111 and 114 each coordinate Mg(2+). Glu114 is a catalytic residue. The DRBM domain maps to 153–223; the sequence is DSKSKLQEIL…AEKMIQILSQ (71 aa).

It belongs to the ribonuclease III family. As to quaternary structure, homodimer. The cofactor is Mg(2+).

It is found in the cytoplasm. The enzyme catalyses Endonucleolytic cleavage to 5'-phosphomonoester.. In terms of biological role, digests double-stranded RNA. Involved in the processing of primary rRNA transcript to yield the immediate precursors to the large and small rRNAs (23S and 16S). Processes some mRNAs, and tRNAs when they are encoded in the rRNA operon. Processes pre-crRNA and tracrRNA of type II CRISPR loci if present in the organism. In Francisella philomiragia subsp. philomiragia (strain ATCC 25017 / CCUG 19701 / FSC 153 / O#319-036), this protein is Ribonuclease 3.